The chain runs to 420 residues: Deoxyribodipyrimidine photo-lyase (420 aa).

A Photolyase/cryptochrome alpha/beta domain is found at 2-124; that stretch reads GPLLVWHRGD…PLHLLPAPHL (123 aa). The interval 147–176 is disordered; the sequence is APPLPPPEALPKGPEEGEIPREDPGLPLPE. Residues 159-170 show a composition bias toward basic and acidic residues; that stretch reads GPEEGEIPREDP. Tyr-197 contributes to the FAD binding site. Arg-201 provides a ligand contact to DNA. FAD-binding positions include 209 to 213, Trp-241, Arg-248, Asn-310, and 341 to 343; these read GSRLS and DGD. Interaction with DNA stretches follow at residues 244-251 and 310-311; these read ELLWRDFS and NR. Gln-373 lines the DNA pocket.

The protein belongs to the DNA photolyase class-1 family. Monomer. It depends on FAD as a cofactor.

It carries out the reaction cyclobutadipyrimidine (in DNA) = 2 pyrimidine residues (in DNA).. Its function is as follows. Involved in repair of UV radiation-induced DNA damage. Catalyzes the light-dependent monomerization (300-600 nm) of cyclobutyl pyrimidine dimers (in cis-syn configuration), which are formed between adjacent bases on the same DNA strand upon exposure to ultraviolet radiation. This Thermus thermophilus (strain ATCC 27634 / DSM 579 / HB8) protein is Deoxyribodipyrimidine photo-lyase (phr).